A 447-amino-acid polypeptide reads, in one-letter code: NADP-specific glutamate dehydrogenase (447 aa).

Residues Lys-92, Gln-113, and Lys-116 each coordinate substrate. Lys-128 functions as the Proton donor in the catalytic mechanism. A substrate-binding site is contributed by Gly-167. NADP(+) contacts are provided by Thr-211 and Asn-242. Ser-380 is a substrate binding site.

The protein belongs to the Glu/Leu/Phe/Val dehydrogenases family. In terms of assembly, homohexamer.

The enzyme catalyses L-glutamate + NADP(+) + H2O = 2-oxoglutarate + NH4(+) + NADPH + H(+). Its function is as follows. Catalyzes the reversible oxidative deamination of glutamate to alpha-ketoglutarate and ammonia. In Salmonella typhimurium (strain LT2 / SGSC1412 / ATCC 700720), this protein is NADP-specific glutamate dehydrogenase (gdhA).